A 401-amino-acid chain; its full sequence is MAFLSLFLCLVFSSPLMAMPPALQGRKAISPASILKGPSTDNGARDFHGRKFPHFMMQLYQNIISRRDKDLSNLEHPTLQESDTVQSFIAKSYTTVGNHWTLFFDMSSISTNNELKLAELRICLPSFGKSHSVTVEIYHTKDTKEKLFMGSFKTKISSALDADCKVFNLTMVLHNYLIRGKRLIKDEYIQAKGLLLRDLEKSAAEKGAENVDTLKQDKHHVSDFAAERIILVVFAKERSQAKPDPPSLGKQLFPLKYGMADNANKVNGFRRLRRNKKEKTRMDVGTTPPKPVEEIKPKCRKVDMFVDFQKIGWGSWIVYPKAYNAYRCESACAVPLNETDDATNYSYIKSLLPLSDTERRECPSCVPVKMRSMSMLYYENEEFILRHHEEMIVEECGFKDI.

Positions 1-18 are cleaved as a signal peptide; sequence MAFLSLFLCLVFSSPLMA. The propeptide occupies 19–274; that stretch reads MPPALQGRKA…KVNGFRRLRR (256 aa). 3 N-linked (GlcNAc...) asparagine glycosylation sites follow: asparagine 168, asparagine 337, and asparagine 344. 2 cysteine pairs are disulfide-bonded: cysteine 299-cysteine 365 and cysteine 328-cysteine 396.

It belongs to the TGF-beta family. As to quaternary structure, monomer. The propeptide region interacts with bmp4 in a non-covalent manner. As to expression, expressed in the dorsal marginal region of late blastula, becoming restricted to the Spemann organizer at the early gastrula stage.

It localises to the secreted. Its function is as follows. Exhibits mesoderm-dorsalizing activity and neural-inducing activity, but lacks mesoderm-inducing activity. Regulates the expression of specific mesodermal and neural genes. Induces convergent extension movements at the embryonic midline by activating the fgf signaling pathway to induce t/bra expression in the organizer region. Acts with wnt11 to induce Spemann organizer cells and induce axis formation. The unprocessed protein antagonizes bmp-signaling. This chain is Nodal homolog 3-B, found in Xenopus tropicalis (Western clawed frog).